We begin with the raw amino-acid sequence, 290 residues long: Uridine diphosphate glucose pyrophosphatase NUDT22 (290 aa).

Positions 56, 87, 139, 144, 151, 156, and 158 each coordinate substrate. The region spanning 118–285 (ADPLGVGAAL…KGAIFLYNRV (168 aa)) is the Nudix hydrolase domain. The short motif at 175–196 (GELVVHELFSSVLQEICDEVNV) is the Nudix box element. Residues E189 and E193 each contribute to the Mg(2+) site. S274 lines the substrate pocket.

Belongs to the Nudix family. Requires Mg(2+) as cofactor.

It catalyses the reaction UDP-sugar + H2O = UMP + alpha-D-aldose 1-phosphate.. Functionally, hydrolyzes UDP-glucose to glucose 1-phosphate and UMP and UDP-galactose to galactose 1-phosphate and UMP. Preferred substrate is UDP-glucose. The sequence is that of Uridine diphosphate glucose pyrophosphatase NUDT22 (NUDT22) from Bos taurus (Bovine).